The primary structure comprises 223 residues: Deoxyribose-phosphate aldolase 1 (223 aa).

Asp-91 (proton donor/acceptor) is an active-site residue. Lys-154 (schiff-base intermediate with acetaldehyde) is an active-site residue. Catalysis depends on Lys-183, which acts as the Proton donor/acceptor.

This sequence belongs to the DeoC/FbaB aldolase family. DeoC type 1 subfamily.

It localises to the cytoplasm. The enzyme catalyses 2-deoxy-D-ribose 5-phosphate = D-glyceraldehyde 3-phosphate + acetaldehyde. The protein operates within carbohydrate degradation; 2-deoxy-D-ribose 1-phosphate degradation; D-glyceraldehyde 3-phosphate and acetaldehyde from 2-deoxy-alpha-D-ribose 1-phosphate: step 2/2. In terms of biological role, catalyzes a reversible aldol reaction between acetaldehyde and D-glyceraldehyde 3-phosphate to generate 2-deoxy-D-ribose 5-phosphate. This is Deoxyribose-phosphate aldolase 1 from Bacillus licheniformis (strain ATCC 14580 / DSM 13 / JCM 2505 / CCUG 7422 / NBRC 12200 / NCIMB 9375 / NCTC 10341 / NRRL NRS-1264 / Gibson 46).